The chain runs to 370 residues: Dual-specificity RNA methyltransferase RlmN (370 aa).

The active-site Proton acceptor is glutamate 97. Residues 103–340 enclose the Radical SAM core domain; it reads EKSRGTLCIS…CTVRRTRGDD (238 aa). A disulfide bridge connects residues cysteine 110 and cysteine 345. Cysteine 117, cysteine 121, and cysteine 124 together coordinate [4Fe-4S] cluster. Residues 170-171, serine 202, 224-226, and asparagine 302 each bind S-adenosyl-L-methionine; these read GE and SLH. The active-site S-methylcysteine intermediate is the cysteine 345.

The protein belongs to the radical SAM superfamily. RlmN family. [4Fe-4S] cluster serves as cofactor.

The protein localises to the cytoplasm. The catalysed reaction is adenosine(2503) in 23S rRNA + 2 reduced [2Fe-2S]-[ferredoxin] + 2 S-adenosyl-L-methionine = 2-methyladenosine(2503) in 23S rRNA + 5'-deoxyadenosine + L-methionine + 2 oxidized [2Fe-2S]-[ferredoxin] + S-adenosyl-L-homocysteine. It catalyses the reaction adenosine(37) in tRNA + 2 reduced [2Fe-2S]-[ferredoxin] + 2 S-adenosyl-L-methionine = 2-methyladenosine(37) in tRNA + 5'-deoxyadenosine + L-methionine + 2 oxidized [2Fe-2S]-[ferredoxin] + S-adenosyl-L-homocysteine. In terms of biological role, specifically methylates position 2 of adenine 2503 in 23S rRNA and position 2 of adenine 37 in tRNAs. m2A2503 modification seems to play a crucial role in the proofreading step occurring at the peptidyl transferase center and thus would serve to optimize ribosomal fidelity. This chain is Dual-specificity RNA methyltransferase RlmN, found in Hydrogenovibrio crunogenus (strain DSM 25203 / XCL-2) (Thiomicrospira crunogena).